Here is a 304-residue protein sequence, read N- to C-terminus: Acetyl-coenzyme A carboxylase carboxyl transferase subunit beta (304 aa).

Residues 25-294 (LWIKCPETGE…KAIKRDTATE (270 aa)) enclose the CoA carboxyltransferase N-terminal domain.

It belongs to the AccD/PCCB family. As to quaternary structure, acetyl-CoA carboxylase is a heterohexamer composed of biotin carboxyl carrier protein (AccB), biotin carboxylase (AccC) and two subunits each of ACCase subunit alpha (AccA) and ACCase subunit beta (AccD).

Its subcellular location is the cytoplasm. The enzyme catalyses N(6)-carboxybiotinyl-L-lysyl-[protein] + acetyl-CoA = N(6)-biotinyl-L-lysyl-[protein] + malonyl-CoA. It participates in lipid metabolism; malonyl-CoA biosynthesis; malonyl-CoA from acetyl-CoA: step 1/1. In terms of biological role, component of the acetyl coenzyme A carboxylase (ACC) complex. Biotin carboxylase (BC) catalyzes the carboxylation of biotin on its carrier protein (BCCP) and then the CO(2) group is transferred by the transcarboxylase to acetyl-CoA to form malonyl-CoA. In Sinorhizobium medicae (strain WSM419) (Ensifer medicae), this protein is Acetyl-coenzyme A carboxylase carboxyl transferase subunit beta.